A 330-amino-acid chain; its full sequence is 4-hydroxythreonine-4-phosphate dehydrogenase (330 aa).

Substrate-binding residues include H134 and T135. A divalent metal cation-binding residues include H163, H208, and H263. Substrate is bound by residues K271, N280, and R289.

It belongs to the PdxA family. As to quaternary structure, homodimer. Requires Zn(2+) as cofactor. The cofactor is Mg(2+). It depends on Co(2+) as a cofactor.

It localises to the cytoplasm. It carries out the reaction 4-(phosphooxy)-L-threonine + NAD(+) = 3-amino-2-oxopropyl phosphate + CO2 + NADH. The protein operates within cofactor biosynthesis; pyridoxine 5'-phosphate biosynthesis; pyridoxine 5'-phosphate from D-erythrose 4-phosphate: step 4/5. In terms of biological role, catalyzes the NAD(P)-dependent oxidation of 4-(phosphooxy)-L-threonine (HTP) into 2-amino-3-oxo-4-(phosphooxy)butyric acid which spontaneously decarboxylates to form 3-amino-2-oxopropyl phosphate (AHAP). The polypeptide is 4-hydroxythreonine-4-phosphate dehydrogenase (Methylococcus capsulatus (strain ATCC 33009 / NCIMB 11132 / Bath)).